The primary structure comprises 122 residues: MIQSFTRLNVADNSGAKEIMCIKVLGGSHKRYASVGSVIVASVKKAIPNGKVKRGQVVKAVVVRTKKEIQRKNGSLVRFDDNAAVILDAKKDPVGTRIFGPVSREVRYANFMKIISLAPEVV.

Belongs to the universal ribosomal protein uL14 family. Part of the 50S ribosomal subunit. Forms a cluster with proteins L3 and L19. In the 70S ribosome, L14 and L19 interact and together make contacts with the 16S rRNA in bridges B5 and B8.

Its function is as follows. Binds to 23S rRNA. Forms part of two intersubunit bridges in the 70S ribosome. The protein is Large ribosomal subunit protein uL14 of Helicobacter acinonychis (strain Sheeba).